The sequence spans 307 residues: MPKISVIGAGNVGATLAQRLIEKDFADVVMLDVVEGIPQGKALDISQSASVLGFRHAITGSNDYAETAGSEIVVITAGIARKPGMTREELLAINQKIMTDVVSNCLKYSPEATLVVVSNPVDTMTYLAWKLSGLPRKRVVGLSGVLDGGRLATFVARELGVNPSAVSPCVMGEHGGSMVVMPRFTLVNGKPLSELVSPEKADELAKRAVNGGAEIVAFLKTGSAFYAPSASVAAMVEAIFLGSGKVMNCAAVLDGEYGLRNIVLGVPVKLGKGGIKEIITLPLDGQENARLQVSAEMVKAQIASLSL.

NAD(+) is bound by residues 8–13 (GAGNVG) and Asp-32. Arg-81 and Arg-87 together coordinate substrate. NAD(+)-binding positions include Asn-94 and 117–119 (VSN). Substrate-binding residues include Asn-119 and Arg-150. Residue His-174 is the Proton acceptor of the active site.

Belongs to the LDH/MDH superfamily. MDH type 3 family.

It catalyses the reaction (S)-malate + NAD(+) = oxaloacetate + NADH + H(+). Functionally, catalyzes the reversible oxidation of malate to oxaloacetate. In Dehalococcoides mccartyi (strain ATCC BAA-2100 / JCM 16839 / KCTC 5957 / BAV1), this protein is Malate dehydrogenase.